We begin with the raw amino-acid sequence, 306 residues long: Methionyl-tRNA formyltransferase (306 aa).

105 to 108 provides a ligand contact to (6S)-5,6,7,8-tetrahydrofolate; it reads SLLP.

This sequence belongs to the Fmt family.

The catalysed reaction is L-methionyl-tRNA(fMet) + (6R)-10-formyltetrahydrofolate = N-formyl-L-methionyl-tRNA(fMet) + (6S)-5,6,7,8-tetrahydrofolate + H(+). Attaches a formyl group to the free amino group of methionyl-tRNA(fMet). The formyl group appears to play a dual role in the initiator identity of N-formylmethionyl-tRNA by promoting its recognition by IF2 and preventing the misappropriation of this tRNA by the elongation apparatus. The chain is Methionyl-tRNA formyltransferase from Rubrobacter xylanophilus (strain DSM 9941 / JCM 11954 / NBRC 16129 / PRD-1).